Here is a 198-residue protein sequence, read N- to C-terminus: MHFEAEESKEVATDVFNSKNLAVQAQKKILGKMASKSIATTLIDDTSSEVLDELYRVTKEYTQNKKEAEKIIKNLIKTVIKLAILYRNNQFNQDELALMEKFKKKVHQLAMTVVSFHQVDFTFDRNVLSKLLNECREMLHQIIQRHLTTKSHGRVNNVFDHFSDCDFLAALYNPFGNYKPHLQKLCDGINKMLDEENI.

Residues 49-83 adopt a coiled-coil conformation; it reads EVLDELYRVTKEYTQNKKEAEKIIKNLIKTVIKLA.

The protein belongs to the TNFAIP8 family.

The protein resides in the cytoplasm. In terms of biological role, acts as a negative mediator of apoptosis. Suppresses the TNF-mediated apoptosis by inhibiting caspase-8 activity but not the processing of procaspase-8, subsequently resulting in inhibition of BID cleavage and caspase-3 activation. This Bos taurus (Bovine) protein is Tumor necrosis factor alpha-induced protein 8 (TNFAIP8).